We begin with the raw amino-acid sequence, 450 residues long: 3-phosphoshikimate 1-carboxyvinyltransferase (450 aa).

K28, S29, and R33 together coordinate 3-phosphoshikimate. K28 is a phosphoenolpyruvate binding site. 2 residues coordinate phosphoenolpyruvate: G100 and R128. 4 residues coordinate 3-phosphoshikimate: S173, Q175, D326, and K353. Residue Q175 participates in phosphoenolpyruvate binding. D326 serves as the catalytic Proton acceptor. Residues R357 and R402 each contribute to the phosphoenolpyruvate site.

It belongs to the EPSP synthase family. As to quaternary structure, monomer.

The protein localises to the cytoplasm. It catalyses the reaction 3-phosphoshikimate + phosphoenolpyruvate = 5-O-(1-carboxyvinyl)-3-phosphoshikimate + phosphate. It participates in metabolic intermediate biosynthesis; chorismate biosynthesis; chorismate from D-erythrose 4-phosphate and phosphoenolpyruvate: step 6/7. Functionally, catalyzes the transfer of the enolpyruvyl moiety of phosphoenolpyruvate (PEP) to the 5-hydroxyl of shikimate-3-phosphate (S3P) to produce enolpyruvyl shikimate-3-phosphate and inorganic phosphate. The polypeptide is 3-phosphoshikimate 1-carboxyvinyltransferase (Brucella canis (strain ATCC 23365 / NCTC 10854 / RM-666)).